We begin with the raw amino-acid sequence, 340 residues long: Glycerol-3-phosphate dehydrogenase [NAD(P)+] (340 aa).

The NADPH site is built by serine 14, tryptophan 15, and lysine 109. The sn-glycerol 3-phosphate site is built by lysine 109, glycine 140, and serine 142. Alanine 144 provides a ligand contact to NADPH. Positions 195, 248, 258, 259, and 260 each coordinate sn-glycerol 3-phosphate. Lysine 195 functions as the Proton acceptor in the catalytic mechanism. Arginine 259 contacts NADPH. The NADPH site is built by valine 283 and glutamate 285.

Belongs to the NAD-dependent glycerol-3-phosphate dehydrogenase family.

The protein resides in the cytoplasm. The enzyme catalyses sn-glycerol 3-phosphate + NAD(+) = dihydroxyacetone phosphate + NADH + H(+). The catalysed reaction is sn-glycerol 3-phosphate + NADP(+) = dihydroxyacetone phosphate + NADPH + H(+). It functions in the pathway membrane lipid metabolism; glycerophospholipid metabolism. In terms of biological role, catalyzes the reduction of the glycolytic intermediate dihydroxyacetone phosphate (DHAP) to sn-glycerol 3-phosphate (G3P), the key precursor for phospholipid synthesis. The chain is Glycerol-3-phosphate dehydrogenase [NAD(P)+] from Syntrophobacter fumaroxidans (strain DSM 10017 / MPOB).